The sequence spans 401 residues: Deubiquitinase and deneddylase Dub1 (401 aa).

Residues 1 to 11 (MLSPTNSTSKT) show a composition bias toward polar residues. A disordered region spans residues 1–24 (MLSPTNSTSKTAPVPPRDSSKPVL). A helical transmembrane segment spans residues 40–60 (TALAVLLVVVTLGLILLFYSF). The tract at residues 77–130 (KEQPTISIPVPLPSPPLAVPRPSTPPPPVISRPSTPSAPKPSTPPPLLPKAPKP) is disordered. Residues 86–128 (VPLPSPPLAVPRPSTPPPPVISRPSTPSAPKPSTPPPLLPKAP) are compositionally biased toward pro residues. Active-site residues include histidine 275, aspartate 292, and cysteine 345.

Belongs to the peptidase C48 family. As to quaternary structure, binds to host NFKBIA.

Its subcellular location is the secreted. The protein resides in the host cell. The protein localises to the membrane. In terms of biological role, effector proteins function to alter host cell physiology and promote bacterial survival in host tissues. This protease possesses deubiquitinating and deneddylating activities. Impairs ubiquitination and degradation of NF-kappa-B inhibitor alpha (NFKBIA), thereby preventing NF-kappa-B activation. In Chlamydia trachomatis serovar L2 (strain ATCC VR-902B / DSM 19102 / 434/Bu), this protein is Deubiquitinase and deneddylase Dub1 (cdu1).